The following is a 549-amino-acid chain: Glucose-6-phosphate isomerase (549 aa).

Glu355 acts as the Proton donor in catalysis. Residues His386 and Lys514 contribute to the active site.

This sequence belongs to the GPI family.

It is found in the cytoplasm. The enzyme catalyses alpha-D-glucose 6-phosphate = beta-D-fructose 6-phosphate. It participates in carbohydrate biosynthesis; gluconeogenesis. Its pathway is carbohydrate degradation; glycolysis; D-glyceraldehyde 3-phosphate and glycerone phosphate from D-glucose: step 2/4. Its function is as follows. Catalyzes the reversible isomerization of glucose-6-phosphate to fructose-6-phosphate. The sequence is that of Glucose-6-phosphate isomerase from Salmonella choleraesuis (strain SC-B67).